Reading from the N-terminus, the 222-residue chain is Germin-like protein 11-1 (222 aa).

The N-terminal stretch at 1–23 is a signal peptide; that stretch reads MKLSTVLCCYLLLLGLFAPEIIS. Cys-32 and Cys-49 are joined by a disulfide. The 124-residue stretch at 72–195 folds into the Cupin type-1 domain; sequence DNMVRSSANI…AMFAPDSEVA (124 aa). Mn(2+) is bound by residues His-111, His-113, Glu-118, and His-157.

Belongs to the germin family. In terms of assembly, oligomer (believed to be a pentamer but probably hexamer).

The protein resides in the secreted. Its subcellular location is the extracellular space. The protein localises to the apoplast. Its function is as follows. May play a role in plant defense. Probably has no oxalate oxidase activity even if the active site is conserved. The chain is Germin-like protein 11-1 from Oryza sativa subsp. japonica (Rice).